Consider the following 681-residue polypeptide: Minichromosome maintenance domain-containing protein 2 (681 aa).

Phosphoserine is present on Ser292. The region spanning 533 to 621 is the MCM domain; it reads RQFTTEDFEK…LIAALLFETS (89 aa).

Plays an important role in meiotic recombination and associated DNA double-strand break repair. The sequence is that of Minichromosome maintenance domain-containing protein 2 (MCMDC2) from Homo sapiens (Human).